The chain runs to 840 residues: Translation initiation factor IF-2 (840 aa).

Residues 1–251 are disordered; that stretch reads MTEEKKFSSS…GPAVPATERK (251 aa). 2 stretches are compositionally biased toward polar residues: residues 38–50 and 65–83; these read DGTN…TPRS and NRHT…ASRP. A compositionally biased stretch (low complexity) spans 84–102; it reads NQSKSQGQGGRNNQRPGSR. Composition is skewed to basic and acidic residues over residues 110–135 and 158–168; these read PMIR…KTDN and KPAEQSKKAAE. Positions 169 to 207 are enriched in low complexity; sequence KPAQTKPKTAETKTTATTTQSGTGKFGGALASGNNSARN. A compositionally biased stretch (basic residues) spans 230-239; that stretch reads GSKKSRRIAA. The tr-type G domain maps to 341-510; the sequence is ARPPVVTIMG…LLQAEVLELK (170 aa). Positions 350–357 are G1; that stretch reads GHVDHGKT. Position 350–357 (350–357) interacts with GTP; sequence GHVDHGKT. The interval 375–379 is G2; that stretch reads GITQH. The tract at residues 396–399 is G3; that stretch reads DTPG. GTP is bound by residues 396 to 400 and 450 to 453; these read DTPGH and NKID. Residues 450–453 are G4; it reads NKID. A G5 region spans residues 486 to 488; sequence SAK.

It belongs to the TRAFAC class translation factor GTPase superfamily. Classic translation factor GTPase family. IF-2 subfamily.

Its subcellular location is the cytoplasm. Its function is as follows. One of the essential components for the initiation of protein synthesis. Protects formylmethionyl-tRNA from spontaneous hydrolysis and promotes its binding to the 30S ribosomal subunits. Also involved in the hydrolysis of GTP during the formation of the 70S ribosomal complex. The protein is Translation initiation factor IF-2 of Leuconostoc citreum (strain KM20).